Reading from the N-terminus, the 372-residue chain is Small ribosomal subunit protein mS77 (rPPR2) (372 aa).

Residues 1 to 28 (MKSFLLSRQAIHRISLLSSKTPTFCRNF) constitute a mitochondrion transit peptide. Positions 240–265 (DNSIRESETVDGEVEEEGFVPSDEVE) are disordered. Over residues 248 to 257 (TVDGEVEEEG) the composition is skewed to acidic residues.

In terms of assembly, component of the mitochondrial ribosome small subunit.

The protein localises to the mitochondrion. Functionally, required for karyogamy during female gametophyte development, when the two polar nuclei fuse to form the diploid central cell nucleus. The chain is Small ribosomal subunit protein mS77 (rPPR2) from Arabidopsis thaliana (Mouse-ear cress).